Here is a 723-residue protein sequence, read N- to C-terminus: Threonine--tRNA ligase 1, cytoplasmic (723 aa).

Positions 1 to 10 (MSEEQASSPS) are enriched in polar residues. The interval 1–49 (MSEEQASSPSAKMGDEEKPVGAGEEKQKEGSKKKNKEGSGDGGRAELNP) is disordered. Positions 13–39 (MGDEEKPVGAGEEKQKEGSKKKNKEGS) are enriched in basic and acidic residues. Residue Ser-39 is modified to Phosphoserine. The TGS domain occupies 79 to 143 (DSKPIKVTLP…EEDCTLELLK (65 aa)). Lys-243 is modified (N6-acetyllysine). Thr-246 is modified (phosphothreonine). Tyr-298 carries the post-translational modification Phosphotyrosine. Thr-453 bears the Phosphothreonine mark. Ser-702 is subject to Phosphoserine.

The protein belongs to the class-II aminoacyl-tRNA synthetase family. In terms of assembly, homodimer. In terms of processing, ISGylated.

The protein resides in the cytoplasm. The enzyme catalyses tRNA(Thr) + L-threonine + ATP = L-threonyl-tRNA(Thr) + AMP + diphosphate + H(+). Its function is as follows. Catalyzes the attachment of threonine to tRNA(Thr) in a two-step reaction: threonine is first activated by ATP to form Thr-AMP and then transferred to the acceptor end of tRNA(Thr). Also edits incorrectly charged tRNA(Thr) via its editing domain, at the post-transfer stage. This Bos taurus (Bovine) protein is Threonine--tRNA ligase 1, cytoplasmic (TARS1).